The sequence spans 225 residues: Large ribosomal subunit protein eL15 (225 aa).

The interval 159–180 (RPFRGLTSAGKKMRGLRKSRGL) is disordered. The span at 169–180 (KKMRGLRKSRGL) shows a compositional bias: basic residues.

The protein belongs to the eukaryotic ribosomal protein eL15 family.

The chain is Large ribosomal subunit protein eL15 (rpl15e) from Aeropyrum pernix (strain ATCC 700893 / DSM 11879 / JCM 9820 / NBRC 100138 / K1).